A 239-amino-acid polypeptide reads, in one-letter code: Ribosomal RNA small subunit methyltransferase G (239 aa).

Residues G77, F82, A128–E129, and R146 each bind S-adenosyl-L-methionine. Residues K216–S239 form a disordered region.

The protein belongs to the methyltransferase superfamily. RNA methyltransferase RsmG family.

The protein resides in the cytoplasm. Functionally, specifically methylates the N7 position of guanine in position 535 of 16S rRNA. The polypeptide is Ribosomal RNA small subunit methyltransferase G (Staphylococcus epidermidis (strain ATCC 35984 / DSM 28319 / BCRC 17069 / CCUG 31568 / BM 3577 / RP62A)).